Reading from the N-terminus, the 2067-residue chain is MVLDDLPNFEDIYTSLCSSTMGDSEVEFDSGLEDDDTKGDSILEDSTIFVAFKGNIDDKDFKWKLDAILKNVPNLLHMESSKLKVQKVEPWNSVRVTFNIPREAAERLWILAQSNNQQLRDLGILSVQIEGEGAINLALGQNRSQDVRMNGPVASGNSVRMEAGFPMASGPGLIRMTSPAAVMTPQGGNMSSSMMAPGPNPELQPRTPRPASQSDAMDPLLSGLHIQQQSHPSGSLPPAHHSMQPVPVNRQMNPANFPQLQQQQQQQQQQQQQQQQQQQQQQQQQQQQQQLQTRPLQQHQQQPQGIRPQFTAPTQVPVPPGWNQLPSGALQPPPAQGSLGTMTTNQGWKKAPLPSPMQAQLQARPSLATVQTPSHPPPPYPFGSQQASQAHTNFPQMSNPGQFTAPQMKGLQGGPSRVPTPLQQPHLTNKSPASSPSSFQQGSPASSPTVNQTQQQMGPRPPQNNPLSQGFQQPVSSPGRNPMVQQGNVPPNFMVMQQQPPNQGPQSLHPGLGGMPKRLPPGFSAGQANPNFMQGQVPSTTAATPGNSGALQLQANQNVQHAGGQGAGPPQNQMQVSHGPPNMMQPSLMGIHGNINNQQAGSSGVPQVTLGNMQGQPQQGPPSQLMGMHQQIVPSQGQMAQQQGTLNPQNPMILSRAQLMPQGQMMVNAQNQNLGPSPQRMTPPKQMLPQQGPQMMAPHNQMMGPQGQVLLQQNPMIEQIMTNQMQGNKAQFNSQNQSNVMPGPAQIMRGPTPNMQGNMVQFTGQMSGQMLPQQGPVNNSPSQVMGIQGQVLRPPGPSPHMAQQHTDPVTTANNDVNLSQMMPDVSMQQASMVPPHVQSMQGNSASGSHFSGHGVSFNAPFGGAPNGSQMSCGQNPGFPVNKDVTLTSPLLVNLLQSDISAGHFGVNNKQNNTNANKPKKKKPPRKKKNCHQDLNTPDNRPTGLEEVDQQSLPGEQGINLDTTGPKLPDFSNRPPGYPTQPVEQRPLPQMPPQLMQHVAPPPQPPQQQPQPQLPQQQQPPPPSQPQSQQQQQQQQMMMMLMMQQDPKSIRLPVSQNVHPPRGPLNPDSQRMPVQQSGNVPVMVGLQGPASVPPSPDKQRMPMSVNTPMGSNSRKMVYQENPQNSSSSPLGEMSSLPEASGSEVPSVAGGPNNMPSHLVVSQNQLMMTGPKPGPSPLSATQGATPQQPPVNSLPSSHGHHFPNVAAPTQTSRPKTPNRASPRPYYPQTPNNRPPSTEPSEISLSPERLNASIAGLFPPQINIPLPPRPNLNRGFDQQGLNPTTLKAIGQAPSNLTITNPPNFAAPQAHKLDSVVVNSGKQSNPGTTKRASPSNSRRSSPGSSRKTTPSPGRQNSKAPKLTLASQTSTTMLQNMELPRNVLVGPTPLANPPLPGSFPNNTGLNPQNPTVPVPAMGTVLEDNKESVNIPQDSDCQNAQGRKEQVNTELKVVPTQEAKMAVPEDQSKKDGQPLDPNKLPSVEENKNLMSPAMREAPTSLSQLLDNSGAPNVTIKPPGLTDLEVTPPVVSGEDLRKASVIPTLQDPPSKEPSTSLSSPHSSEPCSTLARSELSEVSSNAAPSIPPVMSRPVSSSSISTPLPPNQITVFVTSNPITTSSNTSAALPTHLQSALMSTVVTMPNVGNKVMVSEGQSAAQSNARPQFITPVFINSSSIIQVMKGSQPSTIPATPLTTNSGLMPPSVAVVGPLHIPQNIKFSSAPVTPNVPSSSPAPNIQTGRPLVLSSRATPVQLPSPPCTSSPVVAPNPSVQQVKELNPDEASPQTNTSADQSTLPPSQPTTVVSSLLTNSPGSSANRRSPVSSSKGKGKVDKIGQILLTKACKKVTGSLEKGEEQYGADGETEGPGLEITTPGLMGTEQCSTELDSKTPTPSAPTLLKMTSSPMAPSSTSTGPILPGGALPTSVRSIVTTLVPSELISTAPTTKGNHGGVTSEPLAGGLVEEKVGSHPELLPSIAPSQNLAPKETPATALQGSVARPELEANAAIASGQSCEPKEIVEKSKTLTSRRNSRTEEPTMASESVENGHRKRSSRPASASSSTKDITGAVQSKRRKSK.

A TBP/GTF2A-binding region region spans residues 1 to 932 (MVLDDLPNFE…PPRKKKNCHQ (932 aa)). Residues 1–1060 (MVLDDLPNFE…LPVSQNVHPP (1060 aa)) are CREBBP-binding region. Positions 1–1314 (MVLDDLPNFE…QAHKLDSVVV (1314 aa)) are NCOA1-binding region. Arg95 carries the post-translational modification Asymmetric dimethylarginine. Disordered regions lie at residues 181-253 (AVMT…RQMN) and 293-548 (TRPL…PGNS). Positions 293–304 (TRPLQQHQQQPQ) are enriched in low complexity. 6 stretches are compositionally biased toward polar residues: residues 338–347 (SLGTMTTNQG), 357–372 (MQAQ…TVQT), 383–405 (GSQQ…QFTA), 421–457 (PLQQ…QQQM), 465–506 (NPLS…QGPQ), and 526–548 (GQAN…PGNS). An NCOA6IP-binding region region spans residues 777–931 (VNNSPSQVMG…KPPRKKKNCH (155 aa)). The residue at position 888 (Ser888) is a Phosphoserine. The LXXLL motif 1 signature appears at 891-895 (LVNLL). Disordered regions lie at residues 903–1279 (HFGV…QGLN), 1313–1358 (VVNS…APKL), 1424–1481 (NIPQ…EENK), 1497–1581 (QLLD…IPPV), and 1769–1822 (LNPD…GKGK). The segment covering 907–916 (NNKQNNTNAN) has biased composition (low complexity). Positions 917–929 (KPKKKKPPRKKKN) are enriched in basic residues. Over residues 984–996 (QRPLPQMPPQLMQ) the composition is skewed to low complexity. The segment covering 999–1024 (APPPQPPQQQPQPQLPQQQQPPPPSQ) has biased composition (pro residues). Over residues 1025–1044 (PQSQQQQQQQQMMMMLMMQQ) the composition is skewed to low complexity. 2 positions are modified to asymmetric dimethylarginine: Arg1050 and Arg1061. Residues 1066–1078 (PDSQRMPVQQSGN) show a composition bias toward polar residues. Arg1099 is modified (asymmetric dimethylarginine). Residues 1103–1123 (SVNTPMGSNSRKMVYQENPQN) show a composition bias toward polar residues. The segment covering 1124-1137 (SSSSPLGEMSSLPE) has biased composition (low complexity). 3 stretches are compositionally biased toward polar residues: residues 1152-1165 (NMPS…NQLM), 1176-1194 (LSAT…SLPS), and 1205-1217 (APTQ…TPNR). The span at 1222-1235 (PYYPQTPNNRPPST) shows a compositional bias: pro residues. Polar residues predominate over residues 1313-1324 (VVNSGKQSNPGT). Positions 1326-1349 (KRASPSNSRRSSPGSSRKTTPSPG) are enriched in low complexity. Residues 1424–1435 (NIPQDSDCQNAQ) are compositionally biased toward polar residues. Positions 1495-1499 (LSQLL) match the LXXLL motif 2 motif. Residues 1545-1562 (EPSTSLSSPHSSEPCSTL) show a composition bias toward low complexity. Residues 1644 to 2067 (SEGQSAAQSN…AVQSKRRKSK (424 aa)) form an EP300/CRSP3-binding region region. The segment covering 1775–1805 (SPQTNTSADQSTLPPSQPTTVVSSLLTNSPG) has biased composition (polar residues). Over residues 1806–1818 (SSANRRSPVSSSK) the composition is skewed to low complexity. N6-acetyllysine is present on residues Lys1822 and Lys1825. Disordered stretches follow at residues 1840 to 1911 (GSLE…LPGG) and 1957 to 2067 (VGSH…RKSK). A compositionally biased stretch (polar residues) spans 1871–1883 (EQCSTELDSKTPT). Low complexity predominate over residues 1892–1904 (MTSSPMAPSSTST). The span at 2005–2014 (EPKEIVEKSK) shows a compositional bias: basic and acidic residues. Phosphoserine is present on Ser2022.

As to quaternary structure, monomer and homodimer. Interacts in vitro with the basal transcription factors GTF2A and TBP, suggesting an autonomous transactivation function. Interacts with NCOA1, CRSP3, RBM14, the histone acetyltransferase proteins EP300 and CREBBP, and with methyltransferase proteins NCOA6IP and PRMT2. Interacts with RBM39. Component of the MLL2/3 complex (also named ASCOM complex), at least composed of KMT2D/MLL2 or KMT2C/MLL3, ASH2L, RBBP5, WDR5, NCOA6, DPY30, KDM6A, PAXIP1/PTIP, PAGR1 and alpha- and beta-tubulin. Interacts with ZNF335; may enhance ligand-dependent transcriptional activation by nuclear hormone receptors. In terms of processing, phosphorylated. Widely expressed. High expression in testis and weak expression in small intestine.

The protein resides in the nucleus. Its function is as follows. Nuclear receptor coactivator that directly binds nuclear receptors and stimulates the transcriptional activities in a hormone-dependent fashion. Coactivates expression in an agonist- and AF2-dependent manner. Involved in the coactivation of different nuclear receptors, such as for steroids (GR and ERs), retinoids (RARs and RXRs), thyroid hormone (TRs), vitamin D3 (VDR) and prostanoids (PPARs). Probably functions as a general coactivator, rather than just a nuclear receptor coactivator. May also be involved in the coactivation of the NF-kappa-B pathway. May coactivate expression via a remodeling of chromatin and its interaction with histone acetyltransferase proteins. Involved in placental, cardiac, hepatic and embryonic development. This chain is Nuclear receptor coactivator 6 (Ncoa6), found in Mus musculus (Mouse).